The following is a 1244-amino-acid chain: DNA polymerase beta (1244 aa).

13 repeat units span residues 1069–1072, 1073–1076, 1077–1080, 1081–1084, 1085–1088, 1089–1092, 1093–1096, 1097–1100, 1101–1104, 1105–1108, 1109–1112, 1113–1116, and 1117–1120. The segment at 1069-1118 is disordered; the sequence is AGNPAGNPAGNPAGNPAGNPAGNPAGNPAGNPAGNPAGNPAGNPAGNPAG. The tract at residues 1069 to 1120 is 13 X 4 AA tandem repeats of A-G-N-P; the sequence is AGNPAGNPAGNPAGNPAGNPAGNPAGNPAGNPAGNPAGNPAGNPAGNPAGNP.

This sequence belongs to the DNA polymerase type-B family.

The enzyme catalyses DNA(n) + a 2'-deoxyribonucleoside 5'-triphosphate = DNA(n+1) + diphosphate. Functionally, DNA-directed DNA polymerase involved in viral DNA replication. In African swine fever virus (isolate Pig/Portugal/Lis 60/1960) (ASFV), this protein is DNA polymerase beta (DPOL).